A 332-amino-acid chain; its full sequence is Glycerol-3-phosphate dehydrogenase [NAD(P)+] (332 aa).

Residues Ser10, Trp11, His31, Arg32, and Lys105 each coordinate NADPH. Residues Lys105, Gly136, and Ser138 each contribute to the sn-glycerol 3-phosphate site. Ala140 is an NADPH binding site. Residues Lys191, Asp244, Ser254, Arg255, and Asn256 each contribute to the sn-glycerol 3-phosphate site. The Proton acceptor role is filled by Lys191. An NADPH-binding site is contributed by Arg255. Positions 279 and 281 each coordinate NADPH.

Belongs to the NAD-dependent glycerol-3-phosphate dehydrogenase family.

It is found in the cytoplasm. The enzyme catalyses sn-glycerol 3-phosphate + NAD(+) = dihydroxyacetone phosphate + NADH + H(+). The catalysed reaction is sn-glycerol 3-phosphate + NADP(+) = dihydroxyacetone phosphate + NADPH + H(+). The protein operates within membrane lipid metabolism; glycerophospholipid metabolism. Catalyzes the reduction of the glycolytic intermediate dihydroxyacetone phosphate (DHAP) to sn-glycerol 3-phosphate (G3P), the key precursor for phospholipid synthesis. This is Glycerol-3-phosphate dehydrogenase [NAD(P)+] from Prosthecochloris aestuarii (strain DSM 271 / SK 413).